The sequence spans 422 residues: 26S proteasome non-ATPase regulatory subunit 11 (422 aa).

A2 is subject to N-acetylalanine. A phosphoserine mark is found at S14 and S23. A PCI domain is found at 224–392; sequence DWKTAYSYFY…GVLIIFDEPP (169 aa). A Glycyl lysine isopeptide (Lys-Gly) (interchain with G-Cter in SUMO2) cross-link involves residue K274.

It belongs to the proteasome subunit S9 family. As to quaternary structure, component of the 19S proteasome regulatory particle complex. The 26S proteasome consists of a 20S core particle (CP) and two 19S regulatory subunits (RP). The regulatory particle is made of a lid composed of 9 subunits including PSMD11, a base containing 6 ATPases and few additional components.

In terms of biological role, component of the 26S proteasome, a multiprotein complex involved in the ATP-dependent degradation of ubiquitinated proteins. This complex plays a key role in the maintenance of protein homeostasis by removing misfolded or damaged proteins, which could impair cellular functions, and by removing proteins whose functions are no longer required. Therefore, the proteasome participates in numerous cellular processes, including cell cycle progression, apoptosis, or DNA damage repair. In the complex, PSMD11 is required for proteasome assembly. Plays a key role in increased proteasome activity in embryonic stem cells (ESCs): its high expression in ESCs promotes enhanced assembly of the 26S proteasome, followed by higher proteasome activity. The polypeptide is 26S proteasome non-ATPase regulatory subunit 11 (Psmd11) (Mus musculus (Mouse)).